The chain runs to 171 residues: Transcription antitermination protein NusB (171 aa).

It belongs to the NusB family.

Its function is as follows. Involved in transcription antitermination. Required for transcription of ribosomal RNA (rRNA) genes. Binds specifically to the boxA antiterminator sequence of the ribosomal RNA (rrn) operons. The polypeptide is Transcription antitermination protein NusB (Brucella melitensis biotype 1 (strain ATCC 23456 / CCUG 17765 / NCTC 10094 / 16M)).